Here is a 600-residue protein sequence, read N- to C-terminus: Estrogen receptor (600 aa).

The modulating (transactivation AF-1); mediates interaction with MACROD1 stretch occupies residues 1 to 189 (MTMTLHTKAS…IMESAKETRY (189 aa)). A glycan (O-linked (GlcNAc) serine) is linked at Ser-10. Positions 35–47 (MERALGEVYVDNS) are required for interaction with NCOA1. Residues 35 to 179 (MERALGEVYV…LSSSSEKGNM (145 aa)) are interaction with DDX5; self-association. Phosphoserine; by CDK2 occurs at positions 109 and 111. The residue at position 123 (Ser-123) is a Phosphoserine. Positions 148–177 (DTGPPAFYRSNSDNRRQNGRERLSSSSEKG) are disordered. Over residues 159–170 (SDNRRQNGRERL) the composition is skewed to basic and acidic residues. Ser-172 is modified (phosphoserine; by CK2). 2 NR C4-type zinc fingers span residues 190–210 (CAVC…CEGC) and 226–250 (CPAT…LRKC). The nuclear receptor DNA-binding region spans 190–255 (CAVCNDYASG…RLRKCYEVGM (66 aa)). The segment at 190–315 (CAVCNDYASG…TKKNSPALSL (126 aa)) is mediates interaction with DNTTIP2. The segment at 256–315 (MKGGIRKDRRGGRMLKHKRQRDDLEGRNEMGTSGDMRAANLWPSPLVIKHTKKNSPALSL) is hinge. Arg-265 carries the post-translational modification Asymmetric dimethylarginine; by PRMT1. Residues 267-600 (GRMLKHKRQR…PEAEGFPNTI (334 aa)) are interaction with AKAP13. The interval 269–600 (MLKHKRQRDD…PEAEGFPNTI (332 aa)) is self-association. The region spanning 316–552 (TADQMVSALL…DLLLEMLDAH (237 aa)) is the NR LBD domain. Residues 316–600 (TADQMVSALL…PEAEGFPNTI (285 aa)) are transactivation AF-2. 17beta-estradiol-binding residues include Glu-358 and Arg-399. A lipid anchor (S-palmitoyl cysteine) is attached at Cys-452. His-529 provides a ligand contact to 17beta-estradiol. A Phosphotyrosine; by Tyr-kinases modification is found at Tyr-542. The disordered stretch occupies residues 558-581 (ASRMGVPPEEPSQSQLTTTSSTSA). The segment covering 569–581 (SQSQLTTTSSTSA) has biased composition (low complexity). O-linked (GlcNAc) threonine glycosylation occurs at Thr-576.

It belongs to the nuclear hormone receptor family. NR3 subfamily. In terms of assembly, interacts with BCAS3. Binds DNA as a homodimer. Can form a heterodimer with ESR2. Interacts with coactivator NCOA5. Interacts with PELP1, the interaction is enhanced by 17-beta-estradiol; the interaction increases ESR1 transcriptional activity. Interacts with NCOA7; the interaction is ligand-inducible. Interacts with AKAP13, CUEDC2, HEXIM1, KDM5A, MAP1S, SMARD1, and UBE1C. Interacts with MUC1; the interaction is stimulated by 7 beta-estradiol (E2) and enhances ESR1-mediated transcription. Interacts with DNTTIP2, and UIMC1. Interacts with KMT2D/MLL2. Interacts with ATAD2; the interaction is enhanced by estradiol. Interacts with KIF18A and LDB1. Interacts with RLIM (via its C-terminus). Interacts with MACROD1. Interacts with SH2D4A and PLCG. Interacts with SH2D4A; the interaction blocks binding to PLCG and inhibits estrogen-induced cell proliferation. Interacts with DYNLL1. Interacts with CCDC62; the interaction requires estradiol and appears to enhance the transcription of target genes. Interacts with NR2C1; the interaction prevents homodimerization of ESR1 and suppresses its transcriptional activity and cell growth. Interacts with DNAAF4. Interacts with PRMT2. Interacts with RBFOX2. Interacts with EP300; the interaction is estrogen-dependent and enhanced by CITED1. Interacts with CITED1; the interaction is estrogen-dependent. Interacts with FAM120B, FOXL2, PHB2 and SLC30A9. Interacts with coactivators NCOA3 and NCOA6. Interacts with STK3/MST2 only in the presence of SAV1 and vice-versa. Binds to CSNK1D. Interacts with NCOA2; NCOA2 can interact with ESR1 AF-1 and AF-2 domains simultaneously and mediate their transcriptional synergy. Interacts with DDX5. Interacts with NCOA1; the interaction seems to require a self-association of N-terminal and C-terminal regions. Interacts with ZNF366, DDX17, NFKB1, RELA, SP1 and SP3. Interacts with NRIP1. Interacts with GPER1; the interaction occurs in an estrogen-dependent manner. Interacts with TRIP4 (ufmylated); estrogen dependent. Interacts with LMTK3; the interaction phosphorylates ESR1 (in vitro) and protects it against proteasomal degradation. Interacts with CCAR2 (via N-terminus) in a ligand-independent manner. Interacts with ZFHX3. Interacts with SFR1 in a ligand-dependent and -independent manner. Interacts with DCAF13, LATS1 and DCAF1; regulates ESR1 ubiquitination and ubiquitin-mediated proteasomal degradation. Interacts (via DNA-binding domain) with POU4F2 (C-terminus); this interaction increases the estrogen receptor ESR1 transcriptional activity in a DNA- and ligand 17-beta-estradiol-independent manner. Interacts with ESRRB isoform 1. Interacts with UBE3A and WBP2. Interacts with GTF2B. Interacts with RBM39. In the absence of hormonal ligand, interacts with TACC1. Interacts with PI3KR1 or PI3KR2 and PTK2/FAK1. Interacts with SRC. Interacts with BAG1; the interaction is promoted in the absence of estradiol (17-beta-estradiol/E2). Interacts with and ubiquitinated by STUB1; the interaction is promoted in the absence of estradiol (17-beta-estradiol/E2). Interacts with NEDD8. Phosphorylated by cyclin A/CDK2 and CK1. Phosphorylation probably enhances transcriptional activity. Dephosphorylation at Ser-123 by PPP5C inhibits its transactivation activity. Phosphorylated by LMTK3 (in vitro). In terms of processing, ubiquitinated; regulated by LATS1 via DCAF1 it leads to ESR1 proteasomal degradation. Deubiquitinated by OTUB1. Ubiquitinated by STUB1/CHIP; in the CA1 hippocampal region following loss of endogenous circulating estradiol (17-beta-estradiol/E2). Ubiquitinated by UBR5, leading to its degradation: UBR5 specifically recognizes and binds ligand-bound ESR1 when it is not associated with coactivators (NCOAs). In presence of NCOAs, the UBR5-degron is not accessible, preventing its ubiquitination and degradation. Post-translationally, palmitoylated at Cys-452 by ZDHHC7 and ZDHHC21. This modification is required for plasma membrane targeting and for rapid intracellular signaling via ERK and AKT kinases and cAMP generation, but not for signaling mediated by the nuclear hormone receptor. Dimethylated by PRMT1 at Arg-265. The methylation may favor cytoplasmic localization. Demethylated by JMJD6 at Arg-265. As to expression, expressed in the CA1 region of the hippocampus, expression decreases with age (at protein level). Expressed in the uterus (at protein level).

It is found in the nucleus. It localises to the cytoplasm. The protein localises to the golgi apparatus. The protein resides in the cell membrane. Functionally, nuclear hormone receptor. The steroid hormones and their receptors are involved in the regulation of eukaryotic gene expression and affect cellular proliferation and differentiation in target tissues. Ligand-dependent nuclear transactivation involves either direct homodimer binding to a palindromic estrogen response element (ERE) sequence or association with other DNA-binding transcription factors, such as AP-1/c-Jun, c-Fos, ATF-2, Sp1 and Sp3, to mediate ERE-independent signaling. Ligand binding induces a conformational change allowing subsequent or combinatorial association with multiprotein coactivator complexes through LXXLL motifs of their respective components. Mutual transrepression occurs between the estrogen receptor (ER) and NF-kappa-B in a cell-type specific manner. Decreases NF-kappa-B DNA-binding activity and inhibits NF-kappa-B-mediated transcription from the IL6 promoter and displace RELA/p65 and associated coregulators from the promoter. Recruited to the NF-kappa-B response element of the CCL2 and IL8 promoters and can displace CREBBP. Present with NF-kappa-B components RELA/p65 and NFKB1/p50 on ERE sequences. Can also act synergistically with NF-kappa-B to activate transcription involving respective recruitment adjacent response elements; the function involves CREBBP. Can activate the transcriptional activity of TFF1. Also mediates membrane-initiated estrogen signaling involving various kinase cascades. Essential for MTA1-mediated transcriptional regulation of BRCA1 and BCAS3. Maintains neuronal survival in response to ischemic reperfusion injury when in the presence of circulating estradiol (17-beta-estradiol/E2). The protein is Estrogen receptor (Esr1) of Rattus norvegicus (Rat).